Here is a 513-residue protein sequence, read N- to C-terminus: Ankyrin repeat domain-containing protein 13C-B (513 aa).

Residues 1-19 are compositionally biased toward basic and acidic residues; it reads MTGEKIRSLHRDQKPSKDE. Disordered stretches follow at residues 1–34 and 55–77; these read MTGEKIRSLHRDQKPSKDEDLLEPDEEATADGTF and PSNPALLQNHHHHHQQQISPMTP. Positions 20 to 29 are enriched in acidic residues; it reads DLLEPDEEAT. ANK repeat units follow at residues 83 to 114, 115 to 144, and 148 to 177; these read DVYFPVHECVIKGDIRKLSSLIRSHNIGQKDN, HGNTPLHLAVMLGNKECAHLLLAHNAPVKV, and QGWSPLAEAISYGDRQMITALLRKLKQQSR.

Its subcellular location is the endoplasmic reticulum membrane. Functionally, acts as a molecular chaperone for G protein-coupled receptors, regulating their biogenesis and exit from the ER. The protein is Ankyrin repeat domain-containing protein 13C-B (ankrd13c-b) of Xenopus laevis (African clawed frog).